A 462-amino-acid chain; its full sequence is MSKLWGGRFTEEAEAWVEEFGASISFDQQLVNQDINGSMAHVTMLAKQGIVTQEEAEKIKIGLQYLLKEAKENKLQFSVEAEDIHLNIEKMLIEQIGEVGGKLHTGRSRNDQVATDMHLYLKEKVEHIIKATKQLQTVLVHQAENNIETIMPGYTHLQRAQPISFAHHILAYFWMLERDVNRYEDSLKRINISPLGAGALAGTTFPIDREYSAELLGFNGIYENSLDAVSDRDFILEFLSNSSMLMMHLSRFCEELILWSSQEFQFIEMSDQYATGSSIMPQKKNPDMAELIRGKTGRVYGNLFSLLTVMKGLPLAYNKDLQEDKEGMFDTVKTVEGCLHIMAGMLETMTVNKEKMGQAVTQDFSNATEIADYLANKGLPFRQAHEIVGKLVLYCTQKGIYLLDVSLETYKEMSSLFEEDLYEVLSPYAAVKRRNSAGGTGFEQIKNALEKAKGLTKEVIKG.

It belongs to the lyase 1 family. Argininosuccinate lyase subfamily.

It localises to the cytoplasm. The catalysed reaction is 2-(N(omega)-L-arginino)succinate = fumarate + L-arginine. It functions in the pathway amino-acid biosynthesis; L-arginine biosynthesis; L-arginine from L-ornithine and carbamoyl phosphate: step 3/3. This is Argininosuccinate lyase from Bacillus cereus (strain B4264).